Consider the following 196-residue polypeptide: Protein LSM12 homolog B (196 aa).

One can recognise a Sm domain in the interval 3 to 70; that stretch reads APGPGEYFSV…LAYVSEVDII (68 aa). Residues 81 to 175 enclose the AD domain; sequence ASLNFNKLVN…IVEKHFRDVE (95 aa).

It belongs to the LSM12 family.

This is Protein LSM12 homolog B (lsm12b) from Danio rerio (Zebrafish).